Here is a 91-residue protein sequence, read N- to C-terminus: Mercuric transport protein periplasmic component (91 aa).

Positions 1–19 (MKKLLSALALAAVVAPVWA) are cleaved as a signal peptide. In terms of domain architecture, HMA spans 22-88 (QTVTLSVPGM…ATEDAGYPSS (67 aa)). Positions 33 and 36 each coordinate Hg(2+).

This sequence belongs to the MerP family. Monomer.

Its subcellular location is the periplasm. Its function is as follows. Involved in mercury resistance. Acts as a mercury scavenger that specifically binds to a mercuric ion in the periplasm and probably passes it to the cytoplasmic mercuric reductase MerA via the mercuric transport protein MerT. The sequence is that of Mercuric transport protein periplasmic component from Pseudomonas fluorescens.